A 132-amino-acid chain; its full sequence is Small ribosomal subunit protein uS17c (132 aa).

Low complexity predominate over residues 1 to 11 (MLLLSSPFVSV). Disordered regions lie at residues 1 to 23 (MLLL…SHGA) and 104 to 132 (PLPP…SSRE). A chloroplast-targeting transit peptide spans 1–31 (MLLLSSPFVSVSPPPPPLSSHGARPALRIEA). Acidic residues predominate over residues 122-132 (SDDDQEPSSRE).

Belongs to the universal ribosomal protein uS17 family. Part of the 30S ribosomal subunit.

It localises to the plastid. The protein localises to the chloroplast. In terms of biological role, one of the primary rRNA binding proteins, it binds specifically to the 5'-end of 16S ribosomal RNA. Functionally, in the hcf60 mutation the Activator tag is inserted 17 base pars upstream of the initiation codon. This mutation is seedling lethal, due to plastid ribosome insufficiency. However under non-light stressed conditions photosynthesis and oxygen evolution can occur. The protein is Small ribosomal subunit protein uS17c (RPS17) of Zea mays (Maize).